Here is a 510-residue protein sequence, read N- to C-terminus: 2,3-bisphosphoglycerate-independent phosphoglycerate mutase (510 aa).

Asp-16 and Ser-66 together coordinate Mn(2+). Ser-66 (phosphoserine intermediate) is an active-site residue. Residues His-127, 156 to 157 (RD), Arg-186, Arg-192, 257 to 260 (RADR), and Lys-333 contribute to the substrate site. The Mn(2+) site is built by Asp-400, His-404, Asp-441, His-442, and His-460.

This sequence belongs to the BPG-independent phosphoglycerate mutase family. Monomer. Requires Mn(2+) as cofactor.

The catalysed reaction is (2R)-2-phosphoglycerate = (2R)-3-phosphoglycerate. The protein operates within carbohydrate degradation; glycolysis; pyruvate from D-glyceraldehyde 3-phosphate: step 3/5. In terms of biological role, catalyzes the interconversion of 2-phosphoglycerate and 3-phosphoglycerate. The chain is 2,3-bisphosphoglycerate-independent phosphoglycerate mutase from Gluconobacter oxydans (strain 621H) (Gluconobacter suboxydans).